Reading from the N-terminus, the 467-residue chain is 2-succinylbenzoate--CoA ligase (467 aa).

This sequence belongs to the ATP-dependent AMP-binding enzyme family. MenE subfamily.

It catalyses the reaction 2-succinylbenzoate + ATP + CoA = 2-succinylbenzoyl-CoA + AMP + diphosphate. Its pathway is quinol/quinone metabolism; 1,4-dihydroxy-2-naphthoate biosynthesis; 1,4-dihydroxy-2-naphthoate from chorismate: step 5/7. It participates in quinol/quinone metabolism; menaquinone biosynthesis. Its function is as follows. Converts 2-succinylbenzoate (OSB) to 2-succinylbenzoyl-CoA (OSB-CoA). In Listeria innocua serovar 6a (strain ATCC BAA-680 / CLIP 11262), this protein is 2-succinylbenzoate--CoA ligase.